Here is a 190-residue protein sequence, read N- to C-terminus: uncharacterized protein (190 aa).

The chain crosses the membrane as a helical span at residues methionine 1–valine 21. Basic and acidic residues predominate over residues arginine 103–serine 114. Positions arginine 103–lysine 130 are disordered.

To B.burgdorferi BB0265.

It localises to the membrane. This is an uncharacterized protein from Treponema pallidum (strain Nichols).